Reading from the N-terminus, the 1031-residue chain is Receptor-like protein EIX1 (1031 aa).

The first 29 residues, 1–29 (MDKWKYARLAQFLFTLSLLFLETSFGLGG), serve as a signal peptide directing secretion. Asparagine 30 is a glycosylation site (N-linked (GlcNAc...) asparagine). The segment at 30–113 (NKTLCLDKER…PRLTGKLSPS (84 aa)) is N-cap. The Extracellular portion of the chain corresponds to 30-971 (NKTLCLDKER…DEEEEFPSLE (942 aa)). An LRR 1 repeat occupies 117-140 (LEYLNYLDLSVNEFERSEIPRFIG). An LRR 2; degenerate repeat occupies 142–165 (LKRLEYLNLSASFFSGVIPIQFQN). N-linked (GlcNAc...) asparagine glycans are attached at residues asparagine 149 and asparagine 165. LRR repeat units follow at residues 166-189 (LTSLRTLDLGENNLIVKDLRWLSH), 191-215 (SSLEFLSLSSSNFQVNNWFQEITKV), 216-240 (PSLKELDLSGCGLSKLVPSQADLAN), and 243-266 (LISLSVLHLCCNEFSSSSEYSWVF). Asparagine 240 is a glycosylation site (N-linked (GlcNAc...) asparagine). The N-linked (GlcNAc...) asparagine glycan is linked to asparagine 267. LRR repeat units lie at residues 269-292 (TTSLTSIDLLYNQLSGQIDDRFGT), 293-317 (LMYLEHLDLANNLKIEGGVPSSFGN), 318-341 (LTRLRHLDMSNTQTVQWLPELFLR), 346-369 (RKSLEVLGLNENSLFGSIVNATRF), 370-393 (SSLKKLYLQKNMLNGSFMESAGQV), 394-416 (STLEYLDLSENQMRGALPDLALF), 417-440 (PSLRELHLGSNQFRGRIPQGIGKL), 441-463 (SQLRILDVSSNRLEGLPESMGQL), 465-487 (NLESFDASYNVLKGTITESHLSN), 488-509 (LSSLVDLDLSFNSLALKTSFNW), 512-536 (PFQLQVISLPSCNLGPSFPKWLQNQ), 538-559 (NYTVLDISLASISDTLPSWFSS), 561-584 (PPDLKILNLSNNQISGRVSDLIEN), and 586-611 (YGYRVIDLSYNNFSGALPLVPTNVQI). An N-linked (GlcNAc...) asparagine glycan is attached at asparagine 317. Residues asparagine 365 and asparagine 383 are each glycosylated (N-linked (GlcNAc...) asparagine). N-linked (GlcNAc...) asparagine glycosylation is present at asparagine 487. Asparagine 538, asparagine 568, and asparagine 597 each carry an N-linked (GlcNAc...) asparagine glycan. The stretch at 612-629 (FYLHKNQFFGSISSICRS) is one LRR 21; degenerate repeat. 6 LRR repeats span residues 630–654 (RTSPTSLDLSHNQFSGELPDCWMNM), 655–678 (TSLAVLNLAYNNFSGEIPHSLGSL), 679–703 (TNLKALYIRQNSLSGMLPSFSQCQG), 705–725 (QILDLGGNKLTGSIPGWIGTD), 726–750 (LLNLRILSLRFNRLHGSIPSIICQL), and 752–773 (FLQILDLSANGLSGKIPHCFNN). Asparagine 653 and asparagine 666 each carry an N-linked (GlcNAc...) asparagine glycan. N-linked (GlcNAc...) asparagine glycosylation is found at asparagine 773 and asparagine 781. LRR repeat units follow at residues 823-847 (LLYLKTIDLSSNELIGGVPKEIADM), 848-871 (RGLKSLNLSRNELNGTVIEGIGQM), 872-895 (RMLESLDMSRNQLSGVIPQDLANL), and 896-918 (TFLSVLDLSNNQLSGRIPSSTQL). N-linked (GlcNAc...) asparagine glycans are attached at residues asparagine 854, asparagine 861, and asparagine 894. The C-cap/acidic domain stretch occupies residues 919–971 (QSFDRSSYSDNAQLCGPPLQECPGYAPPSPLIDHGSNNNPQEHDEEEEFPSLE). A helical transmembrane segment spans residues 972–992 (FYISMVLSFFVAFWGILGCLI). At 993–1031 (VNSSWRNAYFKFLTDTTSWLDMISRVWFARLKKKLRRAR) the chain is on the cytoplasmic side.

Belongs to the RLP family. Interacts with EIX elicitor protein.

The protein resides in the cell membrane. Involved in plant defense. Confers resistance to the fungal pathogen T.viride through recognition of the EIX elicitor protein. This Solanum lycopersicum (Tomato) protein is Receptor-like protein EIX1.